The chain runs to 129 residues: MKKSGILNRHLAGAIAELGHGDTVLVCDAGMPIPPGPRVIDLAFRAGTPSFAEVLDGLLDELVVEGATAAEEIRDANPDAAALLDVHFPWLEAVPHDELKARTAAARLVVRTGEARPYANVLLRCGVFF.

His-20 serves as the catalytic Proton donor. Substrate contacts are provided by residues Asp-28, His-96, and 118 to 120; that span reads YAN.

It belongs to the RbsD / FucU family. RbsD subfamily. In terms of assembly, homodecamer.

The protein localises to the cytoplasm. It catalyses the reaction beta-D-ribopyranose = beta-D-ribofuranose. The protein operates within carbohydrate metabolism; D-ribose degradation; D-ribose 5-phosphate from beta-D-ribopyranose: step 1/2. Catalyzes the interconversion of beta-pyran and beta-furan forms of D-ribose. In Streptomyces griseus subsp. griseus (strain JCM 4626 / CBS 651.72 / NBRC 13350 / KCC S-0626 / ISP 5235), this protein is D-ribose pyranase 2.